The sequence spans 380 residues: uncharacterized protein (380 aa).

This sequence belongs to the metallo-dependent hydrolases superfamily.

This is an uncharacterized protein from Methanocaldococcus jannaschii (strain ATCC 43067 / DSM 2661 / JAL-1 / JCM 10045 / NBRC 100440) (Methanococcus jannaschii).